The primary structure comprises 269 residues: MNQMNPAFVMPDVQSTVDTRQIPIQRVGVKAVRHPLTVCTESGDVQPTVGVWNLDVRLPADQKGTHMSRFVALLEENRAPLTVERFRAMLASMLVKLEAEAGRIEVTFPYFVNKTAPVSGVQSLLDYEVTLAGESRNGDTRLFLKVLVPVTSLCPCSKKISQYGAHNQRSHVTIDAELAADLPVEALIRIAEEEASCELWGLLKRPDEKFVTERAYENPKFVEDLVRDVAQRLDADERVVAYVLEAENFESIHNHSAYALIERDKRQAA.

This sequence belongs to the GTP cyclohydrolase IV family.

The enzyme catalyses GTP + H2O = 7,8-dihydroneopterin 3'-triphosphate + formate + H(+). It functions in the pathway cofactor biosynthesis; 7,8-dihydroneopterin triphosphate biosynthesis; 7,8-dihydroneopterin triphosphate from GTP: step 1/1. Functionally, converts GTP to 7,8-dihydroneopterin triphosphate. This chain is GTP cyclohydrolase FolE2 1, found in Burkholderia cenocepacia (strain HI2424).